Here is a 500-residue protein sequence, read N- to C-terminus: NAD(P)H-quinone oxidoreductase chain 4, chloroplastic (500 aa).

14 consecutive transmembrane segments (helical) span residues 4–24, 37–57, 87–107, 113–130, 134–154, 167–187, 211–231, 242–262, 272–292, 313–333, 334–354, 386–406, 417–437, and 462–482; these read FPWL…IFFL, MSIC…HFQL, LGSI…AWPV, LFYF…GLFS, LLLF…LLSM, FILY…GMGL, ILFY…IPLH, HYST…YGLI, AHYL…IYAA, MGFI…GAIL, QILS…TACD, LALP…GLIT, LITF…LSML, and LFLL…PDFV.

Belongs to the complex I subunit 4 family.

It localises to the plastid. The protein resides in the chloroplast thylakoid membrane. The enzyme catalyses a plastoquinone + NADH + (n+1) H(+)(in) = a plastoquinol + NAD(+) + n H(+)(out). It carries out the reaction a plastoquinone + NADPH + (n+1) H(+)(in) = a plastoquinol + NADP(+) + n H(+)(out). In Oryza nivara (Indian wild rice), this protein is NAD(P)H-quinone oxidoreductase chain 4, chloroplastic.